The primary structure comprises 424 residues: UPF0597 protein Sbal_3070 (424 aa).

It belongs to the UPF0597 family.

The sequence is that of UPF0597 protein Sbal_3070 from Shewanella baltica (strain OS155 / ATCC BAA-1091).